A 730-amino-acid polypeptide reads, in one-letter code: Catalase-peroxidase (730 aa).

A disordered region spans residues 1-25; it reads MEEKKCPVTGHTQHTPTGGGTKNKD. Positions 95–218 form a cross-link, tryptophyl-tyrosyl-methioninium (Trp-Tyr) (with M-244); sequence WHSAGTYRLN…LAAVQMGLIY (124 aa). The active-site Proton acceptor is the histidine 96. Positions 218 to 244 form a cross-link, tryptophyl-tyrosyl-methioninium (Tyr-Met) (with W-95); it reads YVNPEGPNGQPSVLASGRDVRDTFKRM. Residue histidine 259 participates in heme b binding.

Belongs to the peroxidase family. Peroxidase/catalase subfamily. In terms of assembly, homodimer or homotetramer. Heme b is required as a cofactor. In terms of processing, formation of the three residue Trp-Tyr-Met cross-link is important for the catalase, but not the peroxidase activity of the enzyme.

The enzyme catalyses H2O2 + AH2 = A + 2 H2O. The catalysed reaction is 2 H2O2 = O2 + 2 H2O. Bifunctional enzyme with both catalase and broad-spectrum peroxidase activity. This Desulfitobacterium hafniense (strain Y51) protein is Catalase-peroxidase.